The following is a 119-amino-acid chain: Large ribosomal subunit protein bL20 (119 aa).

This sequence belongs to the bacterial ribosomal protein bL20 family.

Its function is as follows. Binds directly to 23S ribosomal RNA and is necessary for the in vitro assembly process of the 50S ribosomal subunit. It is not involved in the protein synthesizing functions of that subunit. This is Large ribosomal subunit protein bL20 from Nitrobacter winogradskyi (strain ATCC 25391 / DSM 10237 / CIP 104748 / NCIMB 11846 / Nb-255).